The following is a 402-amino-acid chain: Multidrug resistance protein MdtH (402 aa).

The Cytoplasmic segment spans residues 1–12 (MSRVSQARNLGK). The chain crosses the membrane as a helical span at residues 13-33 (YFLLIDNMLVVLGFFVVFPLI). Residues 34–98 (SIRFVDQMGW…GFATMGIAHE (65 aa)) are Periplasmic-facing. Residues 99 to 116 (PWLLWFSCLLSGLGGTLF) form a helical membrane-spanning segment. The Cytoplasmic portion of the chain corresponds to 117 to 138 (DPPRSALVVKLIRPQQRGRFFS). A helical transmembrane segment spans residues 139–159 (LLMMQDSASAVIGALLGSWLL). The Periplasmic portion of the chain corresponds to 160–164 (QYDFR). The chain crosses the membrane as a helical span at residues 165-185 (LVCATGAVLFVLCAAFNAWLL). The Cytoplasmic portion of the chain corresponds to 186–213 (PAWKLSTVRTPVREGMTRVMRDKRFVTY). A helical transmembrane segment spans residues 214-234 (VLTLAGYYMLAVQVMLMLPIM). The Periplasmic portion of the chain corresponds to 235–243 (VNDVAGAPS). The chain crosses the membrane as a helical span at residues 244–264 (AVKWMYAIEACLSLTLLYPIA). At 265–276 (RWSEKHFRLEHR) the chain is on the cytoplasmic side. A helical transmembrane segment spans residues 277-297 (LMAGLLIMSLSMMPVGMVSGL). The Periplasmic segment spans residues 298 to 299 (QQ). A helical membrane pass occupies residues 300-320 (LFTLICLFYIGSIIAEPARET). Residues 321-339 (LSASLADARARGSYMGFSR) lie on the Cytoplasmic side of the membrane. The chain crosses the membrane as a helical span at residues 340–360 (LGLAIGGAIGYIGGGWLFDLG). Residues 361–367 (KSAHQPE) are Periplasmic-facing. Residues 368-388 (LPWMMLGIIGIFTFLALGWQF) form a helical membrane-spanning segment. Over 389 to 402 (SQKRAARRLLERDA) the chain is Cytoplasmic.

Belongs to the major facilitator superfamily. DHA1 family. MdtH (TC 2.A.1.2.21) subfamily.

The protein resides in the cell inner membrane. This chain is Multidrug resistance protein MdtH, found in Shigella flexneri.